Reading from the N-terminus, the 882-residue chain is Homeobox-leucine zipper protein ROC3 (882 aa).

The tract at residues 104–144 (DVDDDHKPQHSGHDQPPDAAQPSGAAGGNAKKKRYHRHTAH) is disordered. The segment covering 107–119 (DDHKPQHSGHDQP) has biased composition (basic and acidic residues). Residues 133–143 (AKKKRYHRHTA) are compositionally biased toward basic residues. Positions 134 to 193 (KKKRYHRHTAHQIQQMEALFKECPHPDDKQRLKLSQELGLKPRQVKFWFQNRRTQMKAQQ) form a DNA-binding region, homeobox. Positions 200 to 263 (ILRAENENLK…LDRLACIATR (64 aa)) form a coiled coil. One can recognise an START domain in the interval 340 to 584 (QEQDKQLVVD…LQRQCERLAS (245 aa)). Over residues 782 to 816 (AAAPTISSSTTTTTGNGNGETSSTPPRNSSSNNNN) the composition is skewed to low complexity. Residues 782-820 (AAAPTISSSTTTTTGNGNGETSSTPPRNSSSNNNNADEL) are disordered.

Belongs to the HD-ZIP homeobox family. Class IV subfamily.

It localises to the nucleus. Its function is as follows. Probable transcription factor. This Oryza sativa subsp. japonica (Rice) protein is Homeobox-leucine zipper protein ROC3 (ROC3).